Reading from the N-terminus, the 407-residue chain is Phosphopentomutase (407 aa).

Residues D10, D306, H311, D347, H348, and H359 each contribute to the Mn(2+) site.

The protein belongs to the phosphopentomutase family. The cofactor is Mn(2+).

It localises to the cytoplasm. The catalysed reaction is 2-deoxy-alpha-D-ribose 1-phosphate = 2-deoxy-D-ribose 5-phosphate. The enzyme catalyses alpha-D-ribose 1-phosphate = D-ribose 5-phosphate. It participates in carbohydrate degradation; 2-deoxy-D-ribose 1-phosphate degradation; D-glyceraldehyde 3-phosphate and acetaldehyde from 2-deoxy-alpha-D-ribose 1-phosphate: step 1/2. Functionally, isomerase that catalyzes the conversion of deoxy-ribose 1-phosphate (dRib-1-P) and ribose 1-phosphate (Rib-1-P) to deoxy-ribose 5-phosphate (dRib-5-P) and ribose 5-phosphate (Rib-5-P), respectively. The chain is Phosphopentomutase from Photorhabdus laumondii subsp. laumondii (strain DSM 15139 / CIP 105565 / TT01) (Photorhabdus luminescens subsp. laumondii).